A 70-amino-acid chain; its full sequence is Large ribosomal subunit protein uL29 (70 aa).

Belongs to the universal ribosomal protein uL29 family.

This is Large ribosomal subunit protein uL29 from Symbiobacterium thermophilum (strain DSM 24528 / JCM 14929 / IAM 14863 / T).